Here is a 128-residue protein sequence, read N- to C-terminus: Large ribosomal subunit protein bL17 (128 aa).

Belongs to the bacterial ribosomal protein bL17 family. Part of the 50S ribosomal subunit. Contacts protein L32.

The protein is Large ribosomal subunit protein bL17 of Baumannia cicadellinicola subsp. Homalodisca coagulata.